The primary structure comprises 224 residues: Transcription cofactor HES-6 (224 aa).

The interval 1–31 (MAPPAAPGRDRVGREDEDGWETRGDRKARKP) is disordered. Over residues 8–25 (GRDRVGREDEDGWETRGD) the composition is skewed to basic and acidic residues. The bHLH domain occupies 25–77 (DRKARKPLVEKKRRARINESLQELRLLLAGAEVQAKLENAEVLELTVRRVQGV). The region spanning 96 to 129 (FAAGYIQCMHEVHTFVSTCQAIDATVAAELLNHL) is the Orange domain. Residues 147-161 (DALAGPPRAPGRSGW) are compositionally biased toward low complexity. The segment at 147–205 (DALAGPPRAPGRSGWPAGGAPGSPIPSPPGPGDDLCSDLEEAPEAELSQAPAEGPDLVP) is disordered. Over residues 181–190 (LCSDLEEAPE) the composition is skewed to acidic residues. The WRPW motif signature appears at 221–224 (WRPW).

In terms of assembly, transcription repression requires formation of a complex with a corepressor protein of the Groucho/TLE family. Interacts with HES1.

The protein resides in the nucleus. Its function is as follows. Does not bind DNA itself but suppresses both HES1-mediated N box-dependent transcriptional repression and binding of HES1 to E box sequences. Also suppresses HES1-mediated inhibition of the heterodimer formed by ASCL1/MASH1 and TCF3/E47, allowing ASCL1 and TCF3 to up-regulate transcription in its presence. Promotes cell differentiation. This is Transcription cofactor HES-6 from Homo sapiens (Human).